The following is a 501-amino-acid chain: ADP,ATP carrier protein 3 (501 aa).

12 consecutive transmembrane segments (helical) span residues 23 to 43, 59 to 79, 90 to 110, 146 to 166, 183 to 203, 227 to 247, 293 to 313, 326 to 346, 361 to 381, 383 to 403, 446 to 466, and 470 to 490; these read LKLF…FGAL, IISF…TVLY, YIFY…AYII, YALM…LMFW, PVLG…LVFF, IILQ…MFLF, IALL…PWKA, VNFM…FMII, LLTP…IIFI, EIGT…VGAI, FGKS…PTAT, and IIIY…WNII.

This sequence belongs to the ADP/ATP translocase tlc family.

Its subcellular location is the cell membrane. Functionally, provides the rickettsial cell with host ATP in exchange for rickettsial ADP. This is an obligate exchange system. This energy acquiring activity is an important component of rickettsial parasitism. This Rickettsia typhi (strain ATCC VR-144 / Wilmington) protein is ADP,ATP carrier protein 3 (tlcC).